The primary structure comprises 271 residues: Phosphate import ATP-binding protein PstB 1 (271 aa).

Residues 25–266 (LTVEHLNLYY…PTQRRTEDYI (242 aa)) form the ABC transporter domain. 57-64 (GPSGCGKS) serves as a coordination point for ATP.

It belongs to the ABC transporter superfamily. Phosphate importer (TC 3.A.1.7) family. In terms of assembly, the complex is composed of two ATP-binding proteins (PstB), two transmembrane proteins (PstC and PstA) and a solute-binding protein (PstS).

The protein resides in the cell inner membrane. The catalysed reaction is phosphate(out) + ATP + H2O = ADP + 2 phosphate(in) + H(+). Part of the ABC transporter complex PstSACB involved in phosphate import. Responsible for energy coupling to the transport system. This Pectobacterium atrosepticum (strain SCRI 1043 / ATCC BAA-672) (Erwinia carotovora subsp. atroseptica) protein is Phosphate import ATP-binding protein PstB 1.